The sequence spans 123 residues: Protein Wnt-7a (123 aa).

A lipid anchor (O-palmitoleoyl serine; by PORCN) is attached at Ser-1. The interval 33-61 (VEPVRASRNKRPTFLKIKKPLSYRKPMDT) is disordered linker. A disulfide bond links Cys-89 and Cys-104. An N-linked (GlcNAc...) asparagine glycan is attached at Asn-90.

This sequence belongs to the Wnt family. As to quaternary structure, forms a soluble 1:1 complex with AFM; this prevents oligomerization and is required for prolonged biological activity. The complex with AFM may represent the physiological form in body fluids. Interacts with FZD5. Interacts with PORCN. In terms of processing, palmitoleoylation is required for efficient binding to frizzled receptors. Depalmitoleoylation leads to Wnt signaling pathway inhibition.

The protein localises to the secreted. It localises to the extracellular space. The protein resides in the extracellular matrix. In terms of biological role, ligand for members of the frizzled family of seven transmembrane receptors that functions in the canonical Wnt/beta-catenin signaling pathway. Plays an important role in embryonic development, including dorsal versus ventral patterning during limb development, skeleton development and urogenital tract development. Required for central nervous system (CNS) angiogenesis and blood-brain barrier regulation. The polypeptide is Protein Wnt-7a (WNT7A) (Meleagris gallopavo (Wild turkey)).